The chain runs to 481 residues: Sestrin-1 (481 aa).

The segment at 63-244 is N-terminal domain; may mediate the alkylhydroperoxide reductase activity; the sequence is FADAFTDLGR…ICDITNGNHG (182 aa). The Cysteine sulfenic acid (-SOH) intermediate role is filled by Cys122. Positions 295–316 are disordered; it reads KTESMVFSTEDEDPPPDIDVSR. The interval 310–481 is C-terminal domain; mediates TORC1 regulation; that stretch reads PDIDVSRHFE…ALRAITRYMT (172 aa). Residues 375-378, Thr387, and Glu452 contribute to the L-leucine site; that span reads TYNT.

Belongs to the sestrin family.

The protein localises to the nucleus. The protein resides in the cytoplasm. The catalysed reaction is a hydroperoxide + L-cysteinyl-[protein] = S-hydroxy-L-cysteinyl-[protein] + an alcohol. Its function is as follows. May function as an intracellular leucine sensor that negatively regulates the TORC1 signaling pathway through the GATOR complex. In absence of leucine, binds the GATOR subcomplex GATOR2 and prevents TORC1 signaling. Binding of leucine to SESN2 disrupts its interaction with GATOR2 thereby activating the TORC1 signaling pathway. This stress-inducible metabolic regulator may also play a role in protection against oxidative and genotoxic stresses. May prevent the accumulation of reactive oxygen species (ROS) through the alkylhydroperoxide reductase activity born by the N-terminal domain of the protein. The sequence is that of Sestrin-1 from Xenopus laevis (African clawed frog).